Reading from the N-terminus, the 149-residue chain is Large ribosomal subunit protein eL19 (149 aa).

A disordered region spans residues 46 to 99 (EDGTIEAKTAKGNSRGRARKRQQKRAYGHKKGHGSRKGRSGGRQNEKEDWQSRI). Residues 59–85 (SRGRARKRQQKRAYGHKKGHGSRKGRS) are compositionally biased toward basic residues. Positions 89–99 (QNEKEDWQSRI) are enriched in basic and acidic residues.

The protein belongs to the eukaryotic ribosomal protein eL19 family. Part of the 50S ribosomal subunit.

Its function is as follows. Binds to the 23S rRNA. This is Large ribosomal subunit protein eL19 from Natronomonas pharaonis (strain ATCC 35678 / DSM 2160 / CIP 103997 / JCM 8858 / NBRC 14720 / NCIMB 2260 / Gabara) (Halobacterium pharaonis).